Here is a 547-residue protein sequence, read N- to C-terminus: MTAKDIIFDSDARAKLKVGVDKLANAVKVTLGPAGRNVLIDKKFGAPTSTKDGVTVAKEIELADAVENMGAQMVREVASKTSDVAGDGTTTATVLAQAIYREGLKNVAAGARPIDLKRGIDRAVKEVVLELRNISRSISGKKEIAQVGTISANNDPEIGELIAEAMDKVGKDGVITVEEAKGMDTELKVVEGMQFDRGYLSPYFVTNPENMEAELEDPLILIHDKKISNMKELLPILEKSAQSGRPLLIISEDIEGEALATLVVNRLRGTLKVCAVKAPGFGDRRKAMLEDIAILTGGTVISEEKGYKLENATLTYLGQAGRITVDKDNTTVVEGKGKPEEIKARINEIKGQIEKSTSDYDTEKLQERLAKLSGGVAVLNIGASTEVEMKEKKARVEDALHATRAAVQEGIVVGGGVALIRAIKGLDNAVADNEDQKTGIEIIRRALEEPLRQIVANTGTTDGAVVLEKVKNGEGDFGFNARTEQYENLVEAGVVDPTKVTRSALENAASVASILLTTEAAITDIKEEKSDMPAMPPGGMGGMGGMY.

Residues 30-33, lysine 51, 87-91, glycine 415, and aspartate 496 contribute to the ATP site; these read TLGP and DGTTT.

This sequence belongs to the chaperonin (HSP60) family. Forms a cylinder of 14 subunits composed of two heptameric rings stacked back-to-back. Interacts with the co-chaperonin GroES.

The protein localises to the cytoplasm. It carries out the reaction ATP + H2O + a folded polypeptide = ADP + phosphate + an unfolded polypeptide.. Together with its co-chaperonin GroES, plays an essential role in assisting protein folding. The GroEL-GroES system forms a nano-cage that allows encapsulation of the non-native substrate proteins and provides a physical environment optimized to promote and accelerate protein folding. The polypeptide is Chaperonin GroEL (Chlorobium phaeobacteroides (strain DSM 266 / SMG 266 / 2430)).